We begin with the raw amino-acid sequence, 228 residues long: 2,3-bisphosphoglycerate-dependent phosphoglycerate mutase (228 aa).

Residues 8-15, 21-22, Arg60, 87-90, Lys98, 114-115, and 180-181 each bind substrate; these read RHGQSQWN, TG, ERHY, RR, and GN. Residue His9 is the Tele-phosphohistidine intermediate of the active site. The Proton donor/acceptor role is filled by Glu87.

Belongs to the phosphoglycerate mutase family. BPG-dependent PGAM subfamily. As to quaternary structure, homodimer.

It catalyses the reaction (2R)-2-phosphoglycerate = (2R)-3-phosphoglycerate. The protein operates within carbohydrate degradation; glycolysis; pyruvate from D-glyceraldehyde 3-phosphate: step 3/5. Catalyzes the interconversion of 2-phosphoglycerate and 3-phosphoglycerate. In Erythrobacter litoralis (strain HTCC2594), this protein is 2,3-bisphosphoglycerate-dependent phosphoglycerate mutase.